Here is a 229-residue protein sequence, read N- to C-terminus: 2-C-methyl-D-erythritol 4-phosphate cytidylyltransferase (229 aa).

The protein belongs to the IspD/TarI cytidylyltransferase family. IspD subfamily.

The enzyme catalyses 2-C-methyl-D-erythritol 4-phosphate + CTP + H(+) = 4-CDP-2-C-methyl-D-erythritol + diphosphate. Its pathway is isoprenoid biosynthesis; isopentenyl diphosphate biosynthesis via DXP pathway; isopentenyl diphosphate from 1-deoxy-D-xylulose 5-phosphate: step 2/6. Its function is as follows. Catalyzes the formation of 4-diphosphocytidyl-2-C-methyl-D-erythritol from CTP and 2-C-methyl-D-erythritol 4-phosphate (MEP). This Neisseria meningitidis serogroup B (strain ATCC BAA-335 / MC58) protein is 2-C-methyl-D-erythritol 4-phosphate cytidylyltransferase.